Reading from the N-terminus, the 240-residue chain is Orotidine 5'-phosphate decarboxylase (240 aa).

Substrate contacts are provided by residues Asp10, Lys33, 60-69 (DLKLHDIPNT), Thr123, Arg185, Gln194, Gly214, and Arg215. Lys62 functions as the Proton donor in the catalytic mechanism.

It belongs to the OMP decarboxylase family. Type 1 subfamily. As to quaternary structure, homodimer.

It catalyses the reaction orotidine 5'-phosphate + H(+) = UMP + CO2. It functions in the pathway pyrimidine metabolism; UMP biosynthesis via de novo pathway; UMP from orotate: step 2/2. Catalyzes the decarboxylation of orotidine 5'-monophosphate (OMP) to uridine 5'-monophosphate (UMP). This Lactobacillus delbrueckii subsp. bulgaricus (strain ATCC 11842 / DSM 20081 / BCRC 10696 / JCM 1002 / NBRC 13953 / NCIMB 11778 / NCTC 12712 / WDCM 00102 / Lb 14) protein is Orotidine 5'-phosphate decarboxylase.